A 347-amino-acid polypeptide reads, in one-letter code: Phosphate acyltransferase (347 aa).

It belongs to the PlsX family. Homodimer. Probably interacts with PlsY.

It localises to the cytoplasm. The catalysed reaction is a fatty acyl-[ACP] + phosphate = an acyl phosphate + holo-[ACP]. It participates in lipid metabolism; phospholipid metabolism. Catalyzes the reversible formation of acyl-phosphate (acyl-PO(4)) from acyl-[acyl-carrier-protein] (acyl-ACP). This enzyme utilizes acyl-ACP as fatty acyl donor, but not acyl-CoA. This Sinorhizobium fredii (strain NBRC 101917 / NGR234) protein is Phosphate acyltransferase.